The sequence spans 334 residues: S-adenosylmethionine decarboxylase proenzyme (334 aa).

Substrate is bound at residue Phe-7. Catalysis depends on residues Glu-8 and Glu-11. Glu-67 lines the substrate pocket. Ser-68 acts as the Schiff-base intermediate with substrate; via pyruvic acid in catalysis. The residue at position 68 (Ser-68) is a Pyruvic acid (Ser); by autocatalysis. Cys-82 serves as the catalytic Proton donor; for catalytic activity. Phe-223 serves as a coordination point for substrate. Catalysis depends on proton acceptor; for processing activity residues Ser-229 and His-243. Glu-247 is a substrate binding site. Ser-298 is subject to Phosphoserine.

This sequence belongs to the eukaryotic AdoMetDC family. Heterotetramer of two alpha and two beta chains. The cofactor is pyruvate. Post-translationally, is synthesized initially as an inactive proenzyme. Formation of the active enzyme involves a self-maturation process in which the active site pyruvoyl group is generated from an internal serine residue via an autocatalytic post-translational modification. Two non-identical subunits are generated from the proenzyme in this reaction, and the pyruvate is formed at the N-terminus of the alpha chain, which is derived from the carboxyl end of the proenzyme. The post-translation cleavage follows an unusual pathway, termed non-hydrolytic serinolysis, in which the side chain hydroxyl group of the serine supplies its oxygen atom to form the C-terminus of the beta chain, while the remainder of the serine residue undergoes an oxidative deamination to produce ammonia and the pyruvoyl group blocking the N-terminus of the alpha chain.

The enzyme catalyses S-adenosyl-L-methionine + H(+) = S-adenosyl 3-(methylsulfanyl)propylamine + CO2. Its pathway is amine and polyamine biosynthesis; S-adenosylmethioninamine biosynthesis; S-adenosylmethioninamine from S-adenosyl-L-methionine: step 1/1. Its function is as follows. Essential for biosynthesis of the polyamines spermidine and spermine. Promotes maintenance and self-renewal of embryonic stem cells, by maintaining spermine levels. The protein is S-adenosylmethionine decarboxylase proenzyme (AMD1) of Bos taurus (Bovine).